A 256-amino-acid polypeptide reads, in one-letter code: Imidazole glycerol phosphate synthase subunit HisF (256 aa).

Active-site residues include Asp11 and Asp130.

Belongs to the HisA/HisF family. In terms of assembly, heterodimer of HisH and HisF.

The protein resides in the cytoplasm. The enzyme catalyses 5-[(5-phospho-1-deoxy-D-ribulos-1-ylimino)methylamino]-1-(5-phospho-beta-D-ribosyl)imidazole-4-carboxamide + L-glutamine = D-erythro-1-(imidazol-4-yl)glycerol 3-phosphate + 5-amino-1-(5-phospho-beta-D-ribosyl)imidazole-4-carboxamide + L-glutamate + H(+). It functions in the pathway amino-acid biosynthesis; L-histidine biosynthesis; L-histidine from 5-phospho-alpha-D-ribose 1-diphosphate: step 5/9. Functionally, IGPS catalyzes the conversion of PRFAR and glutamine to IGP, AICAR and glutamate. The HisF subunit catalyzes the cyclization activity that produces IGP and AICAR from PRFAR using the ammonia provided by the HisH subunit. The chain is Imidazole glycerol phosphate synthase subunit HisF from Cupriavidus pinatubonensis (strain JMP 134 / LMG 1197) (Cupriavidus necator (strain JMP 134)).